The sequence spans 314 residues: RNA 2',3'-cyclic phosphodiesterase (314 aa).

Residue histidine 43 is the Proton donor of the active site. 2 short sequence motifs (HXTX) span residues 43–46 (HITL) and 129–132 (HITI). Histidine 129 (proton acceptor) is an active-site residue.

This sequence belongs to the 2H phosphoesterase superfamily. ThpR family.

The enzyme catalyses a 3'-end 2',3'-cyclophospho-ribonucleotide-RNA + H2O = a 3'-end 2'-phospho-ribonucleotide-RNA + H(+). In terms of biological role, hydrolyzes RNA 2',3'-cyclic phosphodiester to an RNA 2'-phosphomonoester. In Geobacillus stearothermophilus (Bacillus stearothermophilus), this protein is RNA 2',3'-cyclic phosphodiesterase.